Here is a 316-residue protein sequence, read N- to C-terminus: Transaldolase 2 (316 aa).

The Schiff-base intermediate with substrate role is filled by Lys-131.

Belongs to the transaldolase family. Type 1 subfamily. As to quaternary structure, homodimer.

Its subcellular location is the cytoplasm. The catalysed reaction is D-sedoheptulose 7-phosphate + D-glyceraldehyde 3-phosphate = D-erythrose 4-phosphate + beta-D-fructose 6-phosphate. It functions in the pathway carbohydrate degradation; pentose phosphate pathway; D-glyceraldehyde 3-phosphate and beta-D-fructose 6-phosphate from D-ribose 5-phosphate and D-xylulose 5-phosphate (non-oxidative stage): step 2/3. Functionally, transaldolase is important for the balance of metabolites in the pentose-phosphate pathway. This Salmonella choleraesuis (strain SC-B67) protein is Transaldolase 2.